The sequence spans 425 residues: Glutamyl-tRNA reductase (425 aa).

Substrate is bound by residues 49 to 52 (TCNR), S107, 112 to 114 (EPQ), and Q118. C50 acts as the Nucleophile in catalysis. 187–192 (GAGETI) provides a ligand contact to NADP(+).

The protein belongs to the glutamyl-tRNA reductase family. Homodimer.

The enzyme catalyses (S)-4-amino-5-oxopentanoate + tRNA(Glu) + NADP(+) = L-glutamyl-tRNA(Glu) + NADPH + H(+). It functions in the pathway porphyrin-containing compound metabolism; protoporphyrin-IX biosynthesis; 5-aminolevulinate from L-glutamyl-tRNA(Glu): step 1/2. Its function is as follows. Catalyzes the NADPH-dependent reduction of glutamyl-tRNA(Glu) to glutamate 1-semialdehyde (GSA). This is Glutamyl-tRNA reductase from Pseudomonas putida (strain W619).